The following is a 153-amino-acid chain: D-aminoacyl-tRNA deacylase (153 aa).

Positions 142-143 (GP) match the Gly-cisPro motif, important for rejection of L-amino acids motif.

This sequence belongs to the DTD family. As to quaternary structure, homodimer.

Its subcellular location is the cytoplasm. It catalyses the reaction glycyl-tRNA(Ala) + H2O = tRNA(Ala) + glycine + H(+). It carries out the reaction a D-aminoacyl-tRNA + H2O = a tRNA + a D-alpha-amino acid + H(+). In terms of biological role, an aminoacyl-tRNA editing enzyme that deacylates mischarged D-aminoacyl-tRNAs. Also deacylates mischarged glycyl-tRNA(Ala), protecting cells against glycine mischarging by AlaRS. Acts via tRNA-based rather than protein-based catalysis; rejects L-amino acids rather than detecting D-amino acids in the active site. By recycling D-aminoacyl-tRNA to D-amino acids and free tRNA molecules, this enzyme counteracts the toxicity associated with the formation of D-aminoacyl-tRNA entities in vivo and helps enforce protein L-homochirality. This chain is D-aminoacyl-tRNA deacylase, found in Cupriavidus necator (strain ATCC 17699 / DSM 428 / KCTC 22496 / NCIMB 10442 / H16 / Stanier 337) (Ralstonia eutropha).